A 497-amino-acid polypeptide reads, in one-letter code: Ethanolamine-phosphate phospho-lyase (497 aa).

Residue Lys-278 is modified to N6-(pyridoxal phosphate)lysine. A disordered region spans residues 440–497; that stretch reads TGAETESGISKNTPCRTKMPKEAQSELLRDSSLESRENPSQKRNGLCTDSLLSKRLRT. Over residues 458-479 the composition is skewed to basic and acidic residues; it reads MPKEAQSELLRDSSLESRENPS.

This sequence belongs to the class-III pyridoxal-phosphate-dependent aminotransferase family. In terms of assembly, homotetramer. Pyridoxal 5'-phosphate is required as a cofactor.

It localises to the mitochondrion. The enzyme catalyses phosphoethanolamine + H2O = acetaldehyde + NH4(+) + phosphate. Catalyzes the pyridoxal-phosphate-dependent breakdown of phosphoethanolamine, converting it to ammonia, inorganic phosphate and acetaldehyde. This chain is Ethanolamine-phosphate phospho-lyase (ETNPPL), found in Bos taurus (Bovine).